A 428-amino-acid polypeptide reads, in one-letter code: Small ribosomal subunit protein uS2m (428 aa).

The segment at 30–50 (FLSQDNFTAPPPPPTNSKKQA) is disordered.

It belongs to the universal ribosomal protein uS2 family. Component of the mitochondrial small ribosomal subunit (mt-SSU). Mature N.crassa 74S mitochondrial ribosomes consist of a small (37S) and a large (54S) subunit. The 37S small subunit contains a 16S ribosomal RNA (16S mt-rRNA) and 32 different proteins. The 54S large subunit contains a 23S rRNA (23S mt-rRNA) and 42 different proteins.

It localises to the mitochondrion. Its function is as follows. Component of the mitochondrial ribosome (mitoribosome), a dedicated translation machinery responsible for the synthesis of mitochondrial genome-encoded proteins, including at least some of the essential transmembrane subunits of the mitochondrial respiratory chain. The mitoribosomes are attached to the mitochondrial inner membrane and translation products are cotranslationally integrated into the membrane. This chain is Small ribosomal subunit protein uS2m (mrp4), found in Neurospora crassa (strain ATCC 24698 / 74-OR23-1A / CBS 708.71 / DSM 1257 / FGSC 987).